The following is a 159-amino-acid chain: Transcription elongation factor GreA (159 aa).

Residues 44-75 (SENAEYDAAREQQSQTEARIADLESKLSSATI) adopt a coiled-coil conformation.

It belongs to the GreA/GreB family.

Necessary for efficient RNA polymerase transcription elongation past template-encoded arresting sites. The arresting sites in DNA have the property of trapping a certain fraction of elongating RNA polymerases that pass through, resulting in locked ternary complexes. Cleavage of the nascent transcript by cleavage factors such as GreA or GreB allows the resumption of elongation from the new 3'terminus. GreA releases sequences of 2 to 3 nucleotides. The chain is Transcription elongation factor GreA from Chlorobium phaeovibrioides (strain DSM 265 / 1930) (Prosthecochloris vibrioformis (strain DSM 265)).